A 332-amino-acid chain; its full sequence is Glycerol-3-phosphate dehydrogenase [NAD(P)+] (332 aa).

Serine 15, tryptophan 16, and lysine 110 together coordinate NADPH. Residues lysine 110, glycine 137, and serine 139 each coordinate sn-glycerol 3-phosphate. An NADPH-binding site is contributed by alanine 141. Sn-glycerol 3-phosphate contacts are provided by lysine 192, aspartate 245, serine 255, arginine 256, and asparagine 257. The Proton acceptor role is filled by lysine 192. Arginine 256 is an NADPH binding site. Position 282 (glutamate 282) interacts with NADPH.

Belongs to the NAD-dependent glycerol-3-phosphate dehydrogenase family.

It is found in the cytoplasm. It carries out the reaction sn-glycerol 3-phosphate + NAD(+) = dihydroxyacetone phosphate + NADH + H(+). It catalyses the reaction sn-glycerol 3-phosphate + NADP(+) = dihydroxyacetone phosphate + NADPH + H(+). It functions in the pathway membrane lipid metabolism; glycerophospholipid metabolism. Its function is as follows. Catalyzes the reduction of the glycolytic intermediate dihydroxyacetone phosphate (DHAP) to sn-glycerol 3-phosphate (G3P), the key precursor for phospholipid synthesis. This is Glycerol-3-phosphate dehydrogenase [NAD(P)+] from Coxiella burnetii (strain CbuG_Q212) (Coxiella burnetii (strain Q212)).